A 1509-amino-acid polypeptide reads, in one-letter code: DNA-directed RNA polymerase subunit beta' (1509 aa).

Zn(2+) contacts are provided by C75, C77, C90, and C93. Mg(2+) contacts are provided by D474, D476, and D478. 4 residues coordinate Zn(2+): C804, C878, C885, and C888.

This sequence belongs to the RNA polymerase beta' chain family. As to quaternary structure, the RNAP catalytic core consists of 2 alpha, 1 beta, 1 beta' and 1 omega subunit. When a sigma factor is associated with the core the holoenzyme is formed, which can initiate transcription. It depends on Mg(2+) as a cofactor. Zn(2+) serves as cofactor.

It carries out the reaction RNA(n) + a ribonucleoside 5'-triphosphate = RNA(n+1) + diphosphate. Its function is as follows. DNA-dependent RNA polymerase catalyzes the transcription of DNA into RNA using the four ribonucleoside triphosphates as substrates. The polypeptide is DNA-directed RNA polymerase subunit beta' (Sulfurovum sp. (strain NBC37-1)).